The following is a 308-amino-acid chain: Probable lipid phosphate phosphatase 4 (308 aa).

Helical transmembrane passes span 26–46, 66–86, 93–113, 162–182, 193–213, and 226–246; these read WLIL…EPFH, IPMW…FIVY, VYDL…TGVT, SFPS…AWYL, GHVA…LIGI, and VFAG…HFFP. The disordered stretch occupies residues 274-308; sequence MTRTGSRGMLGNDVEPGNSASSPHDRHRESTDSDF. Positions 296–308 are enriched in basic and acidic residues; the sequence is PHDRHRESTDSDF.

This sequence belongs to the PA-phosphatase related phosphoesterase family.

It localises to the membrane. The protein is Probable lipid phosphate phosphatase 4 (LPP4) of Arabidopsis thaliana (Mouse-ear cress).